We begin with the raw amino-acid sequence, 1125 residues long: Angiopoietin-1 receptor (1125 aa).

The signal sequence occupies residues 1–22; it reads MDSLAGLVLCGVSLLLSATVDG. At 23–748 the chain is on the extracellular side; it reads AMDLILINSL…PADLGGRKML (726 aa). Cysteine 44 and cysteine 102 are joined by a disulfide. The Ig-like C2-type 1 domain occupies 44–123; the sequence is CIASGWRPHE…RTMKMRQQAS (80 aa). N-linked (GlcNAc...) asparagine glycosylation occurs at asparagine 158. EGF-like domains lie at 210–252, 254–299, and 301–341; these read RCEA…RTCE, ACEP…LQCN, and ACQP…LQCE. Intrachain disulfides connect cysteine 211–cysteine 220, cysteine 224–cysteine 233, cysteine 227–cysteine 240, cysteine 242–cysteine 251, cysteine 255–cysteine 264, cysteine 268–cysteine 274, cysteine 280–cysteine 287, cysteine 289–cysteine 298, cysteine 302–cysteine 311, cysteine 315–cysteine 323, cysteine 317–cysteine 329, cysteine 331–cysteine 340, and cysteine 370–cysteine 424. Residues 350–440 form the Ig-like C2-type 2 domain; the sequence is PKIEDLPDHI…GMVEKPFNIS (91 aa). Fibronectin type-III domains lie at 447-541, 545-637, and 642-735; these read PLNA…TASI, PPRG…TLSD, and QPEN…TLSE. A helical transmembrane segment spans residues 749–769; sequence LIAILGSAGMTCLTVLLAFLI. At 770–1125 the chain is on the cytoplasmic side; it reads MLQLKRANVQ…GIDCSAEEAA (356 aa). The 273-residue stretch at 825–1097 folds into the Protein kinase domain; the sequence is IKFQDVIGEG…QILVSLNRML (273 aa). ATP contacts are provided by residues 831–839 and lysine 856; that span reads IGEGNFGQV. Tyrosine 861 carries the post-translational modification Phosphotyrosine; by autocatalysis. Aspartate 965 acts as the Proton acceptor in catalysis. A phosphotyrosine; by autocatalysis mark is found at tyrosine 993, tyrosine 1103, and tyrosine 1109.

It belongs to the protein kinase superfamily. Tyr protein kinase family. Tie subfamily. In terms of assembly, homodimer. Heterodimer with TIE1. Interacts with ANGPT1, ANGPT2 and ANGPT4. At cell-cell contacts in quiescent cells, forms a signaling complex composed of ANGPT1 plus TEK molecules from two adjoining cells. In the absence of endothelial cell-cell contacts, interaction with ANGPT1 mediates contacts with the extracellular matrix. Interacts (tyrosine phosphorylated) with TNIP2. Interacts (tyrosine phosphorylated) with SHC1 (via SH2 domain). Interacts with PTPRB; this promotes endothelial cell-cell adhesion. Interacts with DOK2, GRB2, GRB7, GRB14, PIK3R1 and PTPN11/SHP2. Colocalizes with DOK2 at contacts with the extracellular matrix in migrating cells. Post-translationally, proteolytic processing leads to the shedding of the extracellular domain (soluble TIE-2 alias sTIE-2). In terms of processing, autophosphorylated on tyrosine residues in response to ligand binding. Autophosphorylation occurs in trans, i.e. one subunit of the dimeric receptor phosphorylates tyrosine residues on the other subunit. Autophosphorylation occurs in a sequential manner, where Tyr-993 in the kinase activation loop is phosphorylated first, followed by autophosphorylation at Tyr-1109 and at additional tyrosine residues. ANGPT1-induced phosphorylation is impaired during hypoxia, due to increased expression of ANGPT2. Phosphorylation is important for interaction with GRB14, PIK3R1 and PTPN11. Phosphorylation at Tyr-1103 is important for interaction with GRB2 and GRB7. Phosphorylation at Tyr-1109 is important for interaction with DOK2 and for coupling to downstream signal transduction pathways in endothelial cells. Dephosphorylated by PTPRB. Ubiquitinated. The phosphorylated receptor is ubiquitinated and internalized, leading to its degradation. In terms of tissue distribution, specifically expressed in developing vascular endothelial cells.

It is found in the cell membrane. The protein localises to the cell junction. It localises to the focal adhesion. Its subcellular location is the cytoplasm. The protein resides in the cytoskeleton. It is found in the secreted. The catalysed reaction is L-tyrosyl-[protein] + ATP = O-phospho-L-tyrosyl-[protein] + ADP + H(+). Angiopoietin binding leads to receptor dimerization and activation by autophosphorylation at Tyr-993 on the kinase activation loop. In terms of biological role, tyrosine-protein kinase that acts as a cell-surface receptor for ANGPT1, ANGPT2 and ANGPT4 and regulates angiogenesis, endothelial cell survival, proliferation, migration, adhesion and cell spreading, reorganization of the actin cytoskeleton, but also maintenance of vascular quiescence. Has anti-inflammatory effects by preventing the leakage of pro-inflammatory plasma proteins and leukocytes from blood vessels. Required for normal angiogenesis and heart development during embryogenesis. Required for post-natal hematopoiesis. After birth, activates or inhibits angiogenesis, depending on the context. Inhibits angiogenesis and promotes vascular stability in quiescent vessels, where endothelial cells have tight contacts. In quiescent vessels, ANGPT1 oligomers recruit TEK to cell-cell contacts, forming complexes with TEK molecules from adjoining cells, and this leads to preferential activation of phosphatidylinositol 3-kinase and the AKT1 signaling cascades. In migrating endothelial cells that lack cell-cell adhesions, ANGT1 recruits TEK to contacts with the extracellular matrix, leading to the formation of focal adhesion complexes, activation of PTK2/FAK and of the downstream kinases MAPK1/ERK2 and MAPK3/ERK1, and ultimately to the stimulation of sprouting angiogenesis. ANGPT1 signaling triggers receptor dimerization and autophosphorylation at specific tyrosine residues that then serve as binding sites for scaffold proteins and effectors. Signaling is modulated by ANGPT2 that has lower affinity for TEK, can promote TEK autophosphorylation in the absence of ANGPT1, but inhibits ANGPT1-mediated signaling by competing for the same binding site. Signaling is also modulated by formation of heterodimers with TIE1, and by proteolytic processing that gives rise to a soluble TEK extracellular domain. The soluble extracellular domain modulates signaling by functioning as decoy receptor for angiopoietins. TEK phosphorylates DOK2, GRB7, GRB14, PIK3R1, SHC1 and TIE1. The polypeptide is Angiopoietin-1 receptor (TEK) (Bos taurus (Bovine)).